Here is a 415-residue protein sequence, read N- to C-terminus: Multifunctional CCA protein (415 aa).

Positions 8 and 11 each coordinate ATP. Positions 8 and 11 each coordinate CTP. Asp-21 and Asp-23 together coordinate Mg(2+). Residues Arg-91, Arg-137, and Arg-140 each coordinate ATP. Positions 91, 137, and 140 each coordinate CTP. Positions 228–329 (TGIHTLMTLA…VGLFDSIDAW (102 aa)) constitute an HD domain.

This sequence belongs to the tRNA nucleotidyltransferase/poly(A) polymerase family. Bacterial CCA-adding enzyme type 1 subfamily. As to quaternary structure, monomer. Can also form homodimers and oligomers. Mg(2+) serves as cofactor. Ni(2+) is required as a cofactor.

It carries out the reaction a tRNA precursor + 2 CTP + ATP = a tRNA with a 3' CCA end + 3 diphosphate. It catalyses the reaction a tRNA with a 3' CCA end + 2 CTP + ATP = a tRNA with a 3' CCACCA end + 3 diphosphate. Catalyzes the addition and repair of the essential 3'-terminal CCA sequence in tRNAs without using a nucleic acid template. Adds these three nucleotides in the order of C, C, and A to the tRNA nucleotide-73, using CTP and ATP as substrates and producing inorganic pyrophosphate. tRNA 3'-terminal CCA addition is required both for tRNA processing and repair. Also involved in tRNA surveillance by mediating tandem CCA addition to generate a CCACCA at the 3' terminus of unstable tRNAs. While stable tRNAs receive only 3'-terminal CCA, unstable tRNAs are marked with CCACCA and rapidly degraded. This is Multifunctional CCA protein from Cronobacter sakazakii (strain ATCC BAA-894) (Enterobacter sakazakii).